Consider the following 241-residue polypeptide: Venom nerve growth factor (241 aa).

The signal sequence occupies residues 1-18 (MSMLCYTLIIAFLIGIWA). A propeptide spanning residues 19–122 (APKSEDNVPL…SLNRNIRAKR (104 aa)) is cleaved from the precursor. 3 disulfides stabilise this stretch: cysteine 136–cysteine 201, cysteine 179–cysteine 229, and cysteine 189–cysteine 231. Asparagine 145 is a glycosylation site (N-linked (GlcNAc...) asparagine).

The protein belongs to the NGF-beta family. In terms of assembly, homodimer; non-covalently linked. In terms of tissue distribution, expressed by the venom gland.

It is found in the secreted. Its function is as follows. Nerve growth factor is important for the development and maintenance of the sympathetic and sensory nervous systems. It stimulates division and differentiation of sympathetic and embryonic sensory neurons as well as basal forebrain cholinergic neurons in the brain. Its relevance in the snake venom is not clear. However, it has been shown to inhibit metalloproteinase-dependent proteolysis of platelet glycoprotein Ib alpha, suggesting a metalloproteinase inhibition to prevent metalloprotease autodigestion and/or protection against prey proteases. Binds a lipid between the two protein chains in the homodimer. The lipid-bound form promotes histamine relase from mouse mast cells, contrary to the lipid-free form. The protein is Venom nerve growth factor of Crotalus durissus terrificus (South American rattlesnake).